Consider the following 82-residue polypeptide: Delta-ctenitoxin-Pn2a (82 aa).

Positions 1–17 (MKVAILFLSILVLAVAS) are cleaved as a signal peptide. The propeptide occupies 18-34 (ESIEESRDDFAVEELGR). 5 disulfide bridges follow: C37–C51, C44–C57, C48–C80, C50–C65, and C59–C63.

This sequence belongs to the neurotoxin 03 (Tx2) family. 06 subfamily. In terms of tissue distribution, expressed by the venom gland.

The protein resides in the secreted. Functionally, toxin that is known to potentiate erectile function. It binds voltage-dependently to sodium channels (Nav), inhibits the inactivation of the activated channels and decreases the peak inward current. The toxin delays inactivation of Nav1.2/SCN2A, Nav1.3/SCN3A, Nav1.4/SCN4A and Nav1.8/SCN10A, slows the inactivation process and decreases the sodium peak amplitude of Nav1.5/SCN5A and Nav1.6/SCN8A. In vivo, it enhances erectile function by inducing the release of nictric oxide (NO): it slows the sodium current, leading to depolarization, which leads to an increase in calcium influx (probably via activation of N-type calcium channels) which in turn activates neuronal NO synthase (nNOS/NOS1), inducing nitric oxide (NO) production. In a final step, NO activates soluble guanylate cyclase (GUCY1A1/GUCY1B1) which in turn increases cGMP formation, resulting in penile erection. It is noteworthy that the toxin does not provoke erection by inhibiting phosphodiesterase type 5 (PDE5A), an enzyme that hydrolysis cGMP. In vivo, it also causes scratching, lacrimation, hypersalivation, sweating and agitation followed by spastic paralysis of the anterior and posterior extremities and death at dose levels of 0.79 mg/mouse. It is insecticidal to the larval and adult forms of the house fly. The toxin also improves cavernosal relaxation in different models where erectile dysfunction is observed, such as deoxycorticosterone-acetate (DOCA)-salt hypertensive rats, mice models for type-1 diabetes, as well as elderly rats. This Phoneutria nigriventer (Brazilian armed spider) protein is Delta-ctenitoxin-Pn2a.